The sequence spans 264 residues: MSKVTSSTLLKYKQEGRKFTALTAYDASFASAFDGEGIDVLLVGDSLGMVLQGHDDTLPVTTADIAYHTRCVRRGIERSLLIADMPFMSYATPEQAMENATTLMQAGANMVKLEGGHWLLETVTKLTERGIPVCAHLGLTPQSVNVFGGFKVQGRDAENAQRIIDEAKALEAAGAQLLVVECIPASLATAITQALTIPVIGIGAGATTDGQILVMHDVLGISSGYIPRFSKNYLKQTGEIRSAVRAYIEEVANGSFPSAEHTFN.

Residues Asp-45 and Asp-84 each coordinate Mg(2+). Residues 45–46, Asp-84, and Lys-112 each bind 3-methyl-2-oxobutanoate; that span reads DS. Glu-114 provides a ligand contact to Mg(2+). Glu-181 functions as the Proton acceptor in the catalytic mechanism.

It belongs to the PanB family. Homodecamer; pentamer of dimers. The cofactor is Mg(2+).

The protein localises to the cytoplasm. The enzyme catalyses 3-methyl-2-oxobutanoate + (6R)-5,10-methylene-5,6,7,8-tetrahydrofolate + H2O = 2-dehydropantoate + (6S)-5,6,7,8-tetrahydrofolate. It participates in cofactor biosynthesis; (R)-pantothenate biosynthesis; (R)-pantoate from 3-methyl-2-oxobutanoate: step 1/2. Catalyzes the reversible reaction in which hydroxymethyl group from 5,10-methylenetetrahydrofolate is transferred onto alpha-ketoisovalerate to form ketopantoate. This is 3-methyl-2-oxobutanoate hydroxymethyltransferase from Shewanella oneidensis (strain ATCC 700550 / JCM 31522 / CIP 106686 / LMG 19005 / NCIMB 14063 / MR-1).